The following is a 696-amino-acid chain: L-amino-acid oxidase (696 aa).

Positions 1-130 (MKWSAAAGAA…IKMRRDLKAR (130 aa)) are excised as a propeptide. FAD-binding positions include glutamate 207, arginine 215, 236–237 (MR), and valine 440. Residue arginine 237 participates in substrate binding. Position 564 (tyrosine 564) interacts with substrate. FAD is bound by residues glutamate 649 and 658–661 (IASA).

The protein belongs to the flavin monoamine oxidase family. FAD is required as a cofactor.

The enzyme catalyses an L-alpha-amino acid + O2 + H2O = a 2-oxocarboxylate + H2O2 + NH4(+). The sequence is that of L-amino-acid oxidase (lox) from Neurospora crassa (strain ATCC 24698 / 74-OR23-1A / CBS 708.71 / DSM 1257 / FGSC 987).